A 239-amino-acid polypeptide reads, in one-letter code: Ribosomal RNA small subunit methyltransferase G (239 aa).

S-adenosyl-L-methionine-binding positions include glycine 78, phenylalanine 83, 129 to 130 (AE), and arginine 148.

This sequence belongs to the methyltransferase superfamily. RNA methyltransferase RsmG family.

The protein resides in the cytoplasm. Functionally, specifically methylates the N7 position of a guanine in 16S rRNA. The protein is Ribosomal RNA small subunit methyltransferase G of Clostridium botulinum (strain Eklund 17B / Type B).